Consider the following 180-residue polypeptide: UPF0227 protein YcfP (180 aa).

Belongs to the UPF0227 family.

This Salmonella gallinarum (strain 287/91 / NCTC 13346) protein is UPF0227 protein YcfP.